The sequence spans 510 residues: Sulfoquinovosyl transferase SQD2 (510 aa).

The N-terminal 83 residues, 1–83 (MTTLSSINLS…SNDMTITQVR (83 aa)), are a transit peptide targeting the chloroplast. Position 88 is a phosphoserine (Ser88). Residues 198 to 218 (PGVMVFGALAIAKMLSVPIVM) traverse the membrane as a helical segment.

This sequence belongs to the glycosyltransferase group 1 family. Glycosyltransferase 4 subfamily.

It is found in the plastid. The protein resides in the chloroplast membrane. It carries out the reaction UDP-alpha-D-6-sulfoquinovose + a 1,2-diacyl-sn-glycerol = a 6-sulfo-alpha-D-quinovosyldiacylglycerol + UDP + H(+). The protein operates within glycolipid biosynthesis. Functionally, catalyzes the transfer of the sulfoquinovose moiety from UDP-sulfoquinovose to diacylglycerol during sulfolipid biosynthesis. Sulfolipid contributes to maintaining a negatively charged lipid-water interface, a requirement for proper function of photosynthetic membranes. Sulfolipid may also function as a substitute of anionic phospholipids under phosphate-limited growth conditions. The chain is Sulfoquinovosyl transferase SQD2 from Arabidopsis thaliana (Mouse-ear cress).